A 106-amino-acid polypeptide reads, in one-letter code: Adipokinetic hormone/corazonin-related peptide (106 aa).

Positions 1-25 (MRNSIYKLIMFAVLCMVLTSSLSYA) are cleaved as a signal peptide. Gln26 carries the post-translational modification Pyrrolidone carboxylic acid. Alanine amide is present on Ala35. The propeptide occupies 39 to 106 (SLAEAAQSTG…GLPLFSNGHL (68 aa)).

Belongs to the AKH/HRTH/RPCH family. As to expression, only expressed in the head and thorax body segments of adults. Is more expressed in adult males than in females.

The protein localises to the secreted. Neuropeptide with neuromodulator or neurotransmitter role that activates the adipokinetic hormone/corazonin-related peptide receptor (ACPR). May function in regulation of post-ecdysis activities. Does not activate the A.gambiae adipokinetic hormone (AKH) and corazonin (CRZ) receptors. The sequence is that of Adipokinetic hormone/corazonin-related peptide from Aedes aegypti (Yellowfever mosquito).